Reading from the N-terminus, the 763-residue chain is Ras and Rab interactor 1 (763 aa).

M1 carries the N-acetylmethionine modification. A disordered region spans residues 1 to 52 (MEDPGETGAHPLGATNLNFVPGHQQKEKPSTDPLYDTPDTRGVQAGGSQQPA). Phosphotyrosine; by ABL1 and ABL2 is present on Y35. An SH2 domain is found at 68–151 (WLQLRANAAA…QLICGYCRTR (84 aa)). Disordered regions lie at residues 177–200 (LNTK…RSPQ), 238–273 (STET…PPRQ), and 301–331 (QEVD…RPRH). Residues S198, S246, S319, and S323 each carry the phosphoserine modification. A compositionally biased stretch (pro residues) spans 245–257 (LSPPAVPPPPVPV). A compositionally biased stretch (low complexity) spans 316 to 326 (SSGSPTTSPRL). S340 carries the post-translational modification Phosphoserine; by PKD/PRKD1. A VPS9 domain is found at 445 to 587 (LSADGSLGRL…LSGLSQARAL (143 aa)). Position 598 is a phosphoserine (S598). The Ras-associating domain occupies 613–695 (FQHLLRVAYQ…GYLIYRRAER (83 aa)). An Omega-N-methylarginine modification is found at R681. A disordered region spans residues 698–763 (TQGAVAEKAK…KAEGSQALEE (66 aa)). Residues 727-755 (REGKPRIAVDQEGKDQARGGHIGPEEQKA) show a composition bias toward basic and acidic residues.

This sequence belongs to the RIN (Ras interaction/interference) family. In terms of assembly, interacts with the GTP-bound form of Ras proteins (NRAS, HRAS and KRAS). This interaction prevents the association between RAF1 and Ras. Interacts with 14-3-3 proteins YWHAB, YWHAE and YWHAZ when phosphorylated on Ser-340. Interacts with the SH3 domain of ABL1 and ABL2. Interacts with RAB5A. The interaction with Ras is probably regulated and antagonized by the interaction with 14-3-3 proteins. The interaction with 14-3-3 proteins is regulated by phosphorylation on Ser-340. Post-translationally, phosphorylated on tyrosine residues by ABL1 and ABL2. Phosphorylation at Ser-340 by PRKD1 induces interaction with 14-3-3 proteins. In terms of tissue distribution, highly expressed in brain. Weakly or no expressed in other tissues, except in testis, where it is expressed at intermediate level. In brain, it is mainly expressed in postnatal forebrain neurons in which it is localized in dendrites and colocalizes with Ras.

Its subcellular location is the cytoplasm. It localises to the membrane. The protein localises to the cytoskeleton. Its function is as follows. Ras effector protein, which may serve as an inhibitory modulator of neuronal plasticity in aversive memory formation. Can affect Ras signaling at different levels. First, by competing with RAF1 protein for binding to activated Ras. Second, by enhancing signaling from ABL1 and ABL2, which regulate cytoskeletal remodeling. Third, by activating RAB5A, possibly by functioning as a guanine nucleotide exchange factor (GEF) for RAB5A, by exchanging bound GDP for free GTP, and facilitating Ras-activated receptor endocytosis. The polypeptide is Ras and Rab interactor 1 (Rin1) (Mus musculus (Mouse)).